The following is a 566-amino-acid chain: Cyclin-dependent kinase-like 2 (566 aa).

The Protein kinase domain occupies 4 to 287 (YENLGLVGEG…CAELLHHDFF (284 aa)). Residues 10-18 (VGEGSYGMV) and lysine 33 contribute to the ATP site. The [NKR]KIAxRE motif lies at 45-51 (KKIAMRE). The active-site Proton acceptor is aspartate 126. Disordered regions lie at residues 307-334 (DARN…GEER) and 545-566 (QVSG…EHQH). Residues 320–334 (RKKEKEKDDSLGEER) show a composition bias toward basic and acidic residues.

Belongs to the protein kinase superfamily. CMGC Ser/Thr protein kinase family. CDC2/CDKX subfamily.

The protein resides in the cytoplasm. It is found in the nucleus. The catalysed reaction is L-seryl-[protein] + ATP = O-phospho-L-seryl-[protein] + ADP + H(+). It catalyses the reaction L-threonyl-[protein] + ATP = O-phospho-L-threonyl-[protein] + ADP + H(+). The chain is Cyclin-dependent kinase-like 2 from Oryctolagus cuniculus (Rabbit).